A 250-amino-acid polypeptide reads, in one-letter code: Entry-fusion complex associated protein OPG095 (250 aa).

The N-myristoyl glycine; by host moiety is linked to residue glycine 2. The interval 2–12 is targeting to MV membrane; sequence GAAASIQTTVN. The Virion surface segment spans residues 2–183; it reads GAAASIQTTV…IAPRQVAGTG (182 aa). Disulfide bonds link cysteine 34/cysteine 57, cysteine 49/cysteine 136, and cysteine 116/cysteine 158. The chain crosses the membrane as a helical span at residues 184 to 204; it reads VQFYMIVIGVIILAALFMYYA. Over 205–250 the chain is Intravirion; the sequence is KRMLFTSTNDKIKLILANKENVHWTTYMDTFFRTSPMVIATTDIQN.

This sequence belongs to the orthopoxvirus OPG095 family. In terms of assembly, component of the entry fusion complex (EFC) composed of OPG053, OPG076, OPG086, OPG094, OPG095, OPG099, OPG107, OPG143, OPG104, OPG147 and OPG155. Except for OPG095 and OPG053, each of the EFC proteins is required for assembly or stability of the complex. Post-translationally, myristoylated. In terms of processing, disulfid bonds are oxidized in the cytoplasm by OPG088 protein. Unglycosylated because produced in viral factories instead of the classic ER -Golgi route.

It localises to the virion membrane. Component of the entry fusion complex (EFC), which consists of 11 proteins. During cell infection, this complex mediates entry of the virion core into the host cytoplasm by a two-step mechanism consisting of lipid mixing of the viral and cellular membranes and subsequent pore formation. The protein is Entry-fusion complex associated protein OPG095 (OPG099) of Variola virus (isolate Human/India/Ind3/1967) (VARV).